We begin with the raw amino-acid sequence, 664 residues long: Tripartite terminase subunit 1 (664 aa).

The C3H1-type zinc-finger motif lies at 205–233 (CHVCFEELCVTANQGATASRRLAGKICDH). Disordered regions lie at residues 273 to 295 (SKMT…AQER) and 440 to 466 (HAAE…GGPE). Low complexity predominate over residues 281 to 292 (GGPAEAPGPAAA).

It belongs to the herpesviridae TRM1 protein family. As to quaternary structure, associates with TRM2 and TRM3 to form the tripartite terminase complex. Interacts with portal protein.

It is found in the host nucleus. Its function is as follows. Component of the molecular motor that translocates viral genomic DNA in empty capsid during DNA packaging. Forms a tripartite terminase complex together with TRM2 and TRM3 in the host cytoplasm. Once the complex reaches the host nucleus, it interacts with the capsid portal vertex. This portal forms a ring in which genomic DNA is translocated into the capsid. TRM1 carries an endonuclease activity that plays an important role for the cleavage of concatemeric viral DNA into unit length genomes. The polypeptide is Tripartite terminase subunit 1 (Bos taurus (Bovine)).